We begin with the raw amino-acid sequence, 51 residues long: Magnetosome protein Mms5 (51 aa).

Residues 1 to 12 (MLSAKGVSLGLG) are Lumenal-facing. An LG region region spans residues 9 to 16 (LGLGLGLG). The helical transmembrane segment at 13 to 33 (LGLGAWGPVLLGVVGVAGAIA) threads the bilayer. Residues 34 to 51 (LYGYYKNRNAEPAAAEAV) lie on the Cytoplasmic side of the membrane.

This sequence belongs to the magnetosome MamD/Mms5 family. Post-translationally, seen in gels as a band of about 5 kDa, with an N-terminus that corresponds to residue 8, suggesting it may undergo N-terminal cleavage.

It is found in the magnetosome membrane. Its function is as follows. Might be involved in magnetite crystal growth. The polypeptide is Magnetosome protein Mms5 (Paramagnetospirillum magneticum (strain ATCC 700264 / AMB-1) (Magnetospirillum magneticum)).